The primary structure comprises 203 residues: Urease accessory protein UreG (203 aa).

Position 10–17 (10–17) interacts with GTP; sequence GPVGAGKT.

This sequence belongs to the SIMIBI class G3E GTPase family. UreG subfamily. Homodimer. UreD, UreF and UreG form a complex that acts as a GTP-hydrolysis-dependent molecular chaperone, activating the urease apoprotein by helping to assemble the nickel containing metallocenter of UreC. The UreE protein probably delivers the nickel.

Its subcellular location is the cytoplasm. Functionally, facilitates the functional incorporation of the urease nickel metallocenter. This process requires GTP hydrolysis, probably effectuated by UreG. The polypeptide is Urease accessory protein UreG (Lachnoclostridium phytofermentans (strain ATCC 700394 / DSM 18823 / ISDg) (Clostridium phytofermentans)).